We begin with the raw amino-acid sequence, 497 residues long: Cysteine--tRNA ligase (497 aa).

Residue Cys-34 coordinates Zn(2+). A 'HIGH' region motif is present at residues 36 to 46 (PTVYDFAHIGN). Positions 243, 268, and 272 each coordinate Zn(2+). The short motif at 301 to 305 (KMAKS) is the 'KMSKS' region element. Residue Lys-304 coordinates ATP. A disordered region spans residues 478–497 (LMDYKDPETGERRTKWEVKR). The segment covering 480–497 (DYKDPETGERRTKWEVKR) has biased composition (basic and acidic residues).

Belongs to the class-I aminoacyl-tRNA synthetase family. As to quaternary structure, monomer. Zn(2+) serves as cofactor.

It localises to the cytoplasm. It carries out the reaction tRNA(Cys) + L-cysteine + ATP = L-cysteinyl-tRNA(Cys) + AMP + diphosphate. In Chelativorans sp. (strain BNC1), this protein is Cysteine--tRNA ligase.